The chain runs to 161 residues: Ribosome maturation factor RimP (161 aa).

This sequence belongs to the RimP family.

The protein resides in the cytoplasm. In terms of biological role, required for maturation of 30S ribosomal subunits. The sequence is that of Ribosome maturation factor RimP from Myxococcus xanthus (strain DK1622).